The following is a 419-amino-acid chain: UDP-N-acetylglucosamine 1-carboxyvinyltransferase (419 aa).

Phosphoenolpyruvate is bound at residue 22–23 (KN). R95 contributes to the UDP-N-acetyl-alpha-D-glucosamine binding site. Catalysis depends on C119, which acts as the Proton donor. The residue at position 119 (C119) is a 2-(S-cysteinyl)pyruvic acid O-phosphothioketal. Residues 164–167 (KVSV), D308, and I330 contribute to the UDP-N-acetyl-alpha-D-glucosamine site.

This sequence belongs to the EPSP synthase family. MurA subfamily.

It localises to the cytoplasm. The catalysed reaction is phosphoenolpyruvate + UDP-N-acetyl-alpha-D-glucosamine = UDP-N-acetyl-3-O-(1-carboxyvinyl)-alpha-D-glucosamine + phosphate. The protein operates within cell wall biogenesis; peptidoglycan biosynthesis. Cell wall formation. Adds enolpyruvyl to UDP-N-acetylglucosamine. This is UDP-N-acetylglucosamine 1-carboxyvinyltransferase from Rickettsia peacockii (strain Rustic).